Here is a 2320-residue protein sequence, read N- to C-terminus: Bromodomain and WD repeat-containing protein 1 (2320 aa).

WD repeat units follow at residues 184 to 223, 226 to 265, 268 to 311, 322 to 365, 366 to 405, 424 to 463, 466 to 506, and 514 to 553; these read GHLSAVYCVAFDRTGHRIFTGSDDCLVKIWSTHNGRLLST, GHSAEISDMAVNYENTMIAAGSCDKIIRVWCLRTCAPVAV, GHTG…LKFS, RPGV…AELE, SHTDKVDSIQFCNNGDRFLSGSRDGTARIWRFEQLEWRSI, FMKPKVTMIAWNQNDSIVVTAVNDHVLKVWNSYTGQLLHN, GHAD…KMKH, and QGHGAVFDCKFSQDGQHFACTDSHGHLLIFGFGCSKPYEK. The tract at residues 668–691 is disordered; it reads QRMGADQDTIPRGLSNGEETPRRG. Position 687 is a phosphothreonine (T687). A phosphoserine mark is found at S696, S701, and S710. 2 disordered regions span residues 809–867 and 895–925; these read NRSW…RYSD and SEDEISTENLSPPKRRRKRKKENKPKKENLR. Low complexity-rich tracts occupy residues 814–824 and 854–867; these read ELSSGNESSSS and YSESSSDSSSRYSD. The segment covering 907-918 has biased composition (basic residues); sequence PKRRRKRKKENK. One can recognise a Bromo 1 domain in the interval 1157-1264; it reads WGQKSRDEEC…DQLLKFIKNQ (108 aa). Residues 1271-1304 form a disordered region; it reads ELSNTSENDEQNAEDLDDSDLPKTSSGRRRVHDG. Over residues 1277 to 1289 the composition is skewed to acidic residues; sequence ENDEQNAEDLDDS. Residue S1289 is modified to Phosphoserine. Positions 1313–1418 constitute a Bromo 2 domain; the sequence is YVESNWKKQC…ALFEEKMKKI (106 aa). Residues 1434-1593 are disordered; that stretch reads RSQRFKQRQN…TGPVSLANGC (160 aa). Over residues 1443–1454 the composition is skewed to polar residues; the sequence is NCKGDSQPNKSI. Over residues 1455–1464 the composition is skewed to basic residues; the sequence is RNLKPKRLKS. S1475 carries the post-translational modification Phosphoserine. The segment covering 1475–1496 has biased composition (polar residues); it reads SPTQSTSSRTAYLGTHKTSAGI. At T1477 the chain carries Phosphothreonine. At S1479 the chain carries Phosphoserine. Positions 1497 to 1509 are enriched in low complexity; the sequence is SSGVTSGDSSDSA. The segment covering 1520-1529 has biased composition (polar residues); it reads PITNGSTLSE. A compositionally biased stretch (low complexity) spans 1535 to 1548; sequence SLATSLSSSASSSS. The segment covering 1549–1561 has biased composition (basic and acidic residues); it reads EESKESSRARESS. Phosphoserine occurs at positions 1605, 1607, 1678, 1683, and 1686. Disordered stretches follow at residues 1670–1805, 1817–1839, and 1862–1899; these read ARKK…KYNT, KILSDSEDSESEEQDREDGKCHK, and DHGCETDLDSDDDKIEKPNNFMKDSASQDNGLSRKISR. The span at 1676–1687 shows a compositional bias: basic and acidic residues; the sequence is HNSEDEQSLKSE. Positions 1701-1712 are enriched in polar residues; it reads PVSSSHTAQSNV. Basic and acidic residues-rich tracts occupy residues 1715–1728 and 1751–1769; these read SENRDSESESDLRV and LKIESSEEDSKSHDSDHAC. Phosphoserine occurs at positions 1755, 1756, 1786, 1788, 1793, and 1820. The segment covering 1821-1832 has biased composition (acidic residues); the sequence is DSEDSESEEQDR. Phosphothreonine is present on T1867. S1871, S1904, S1905, S1907, S1910, and S1943 each carry phosphoserine. T1955 is modified (phosphothreonine). 2 disordered regions span residues 2014 to 2077 and 2112 to 2184; these read LNGD…TLAQ and TKVI…TKGK. Residues S2018, S2020, and S2052 each carry the phosphoserine modification. Composition is skewed to basic and acidic residues over residues 2054–2069 and 2114–2139; these read EDSKSHIPGSETDRTF and VIHDSQETAEKEVKRKRSHPELENVK. Over residues 2140 to 2165 the composition is skewed to polar residues; the sequence is ISETTGNSKFRPDTSSKSSDLGSVTE. T2164 bears the Phosphothreonine mark. 2 positions are modified to phosphoserine: S2166 and V2214.

In terms of assembly, interacts with SMARCA4. As to expression, ubiquitously expressed. Expressed in respiratory epithelial cells and testis spermatozoa.

The protein localises to the cytoplasm. It is found in the nucleus. The protein resides in the cell projection. It localises to the cilium membrane. Its subcellular location is the cytoskeleton. The protein localises to the flagellum axoneme. Functionally, may be a transcriptional activator. May be involved in chromatin remodeling. Plays a role in the regulation of cell morphology and cytoskeletal organization. Required in the control of cell shape. The polypeptide is Bromodomain and WD repeat-containing protein 1 (BRWD1) (Homo sapiens (Human)).